The following is a 690-amino-acid chain: Glutamate--cysteine ligase (690 aa).

2 stretches are compositionally biased toward low complexity: residues 574 to 585 (QQQNGHVNNNNN) and 598 to 619 (NGST…TNGT). The disordered stretch occupies residues 574-620 (QQQNGHVNNNNNNDKKTKNDPIIVNGSTTTTNGTNSGSGITETNGTM).

The protein belongs to the glutamate--cysteine ligase type 3 family.

It catalyses the reaction L-cysteine + L-glutamate + ATP = gamma-L-glutamyl-L-cysteine + ADP + phosphate + H(+). The protein operates within sulfur metabolism; glutathione biosynthesis; glutathione from L-cysteine and L-glutamate: step 1/2. The chain is Glutamate--cysteine ligase (GCS1) from Candida albicans (Yeast).